Here is an 89-residue protein sequence, read N- to C-terminus: MSTVQFNEMIALPNSEISQAIIQTEKELFQLQFKKATRQPFKPHEIKKAKRRLAQLKTILTSRLDALEKKRGNTVMKLIKKQNYMTGNF.

Belongs to the universal ribosomal protein uL29 family.

It is found in the plastid. It localises to the chloroplast. This Trieres chinensis (Marine centric diatom) protein is Large ribosomal subunit protein uL29c (rpl29).